The following is a 383-amino-acid chain: Mannitol-1-phosphate 5-dehydrogenase (383 aa).

3–14 (ALHFGAGNIGRG) is a binding site for NAD(+).

It belongs to the mannitol dehydrogenase family.

It catalyses the reaction D-mannitol 1-phosphate + NAD(+) = beta-D-fructose 6-phosphate + NADH + H(+). This is Mannitol-1-phosphate 5-dehydrogenase from Serratia proteamaculans (strain 568).